A 326-amino-acid polypeptide reads, in one-letter code: Glutaminase 2 (326 aa).

Residues S73, N125, E169, N176, Y200, Y252, and V270 each coordinate substrate.

The protein belongs to the glutaminase family. Homotetramer.

It catalyses the reaction L-glutamine + H2O = L-glutamate + NH4(+). This is Glutaminase 2 from Bacillus anthracis.